Reading from the N-terminus, the 233-residue chain is 2,3,4,5-tetrahydropyridine-2,6-dicarboxylate N-acetyltransferase (233 aa).

Belongs to the transferase hexapeptide repeat family. DapH subfamily.

The enzyme catalyses (S)-2,3,4,5-tetrahydrodipicolinate + acetyl-CoA + H2O = L-2-acetamido-6-oxoheptanedioate + CoA. It participates in amino-acid biosynthesis; L-lysine biosynthesis via DAP pathway; LL-2,6-diaminopimelate from (S)-tetrahydrodipicolinate (acetylase route): step 1/3. In terms of biological role, catalyzes the transfer of an acetyl group from acetyl-CoA to tetrahydrodipicolinate. The sequence is that of 2,3,4,5-tetrahydropyridine-2,6-dicarboxylate N-acetyltransferase from Petrotoga mobilis (strain DSM 10674 / SJ95).